A 908-amino-acid polypeptide reads, in one-letter code: SH3 and PX domain-containing protein 2B (908 aa).

The 125-residue stretch at 5-129 (RSIVEVKVLD…QFFETRPEDL (125 aa)) folds into the PX domain. Tyrosine 25 bears the Phosphotyrosine mark. SH3 domains follow at residues 152–211 (MVLE…GQDG) and 221–280 (EEEE…KNSG). 2 positions are modified to phosphoserine: serine 279 and serine 291. 2 disordered regions span residues 280–300 (GEPL…ALDL) and 315–366 (ELLN…PPIP). A compositionally biased stretch (basic and acidic residues) spans 315 to 337 (ELLNNQRDGRFEGRLVPDGDVKQ). Positions 338 to 347 (RSPKMRQRPP) are enriched in basic residues. In terms of domain architecture, SH3 3 spans 368–427 (QVEEEYYTIAEFQTTIPDGISFQAGLKVEVIEKSLSGWWYIQMEDKEGWAPATFIDKYKK). The segment at 455-832 (TENNTGPEAV…LGPRVTGKVG (378 aa)) is disordered. Composition is skewed to basic and acidic residues over residues 486-499 (KDWK…RKAS), 516-546 (QEEK…KMEP), 569-584 (LARD…DKSK), 595-606 (CGHKVLAKEVKK), and 615-625 (SKAELSEEKVD). Serine 499 and serine 528 each carry phosphoserine. Tyrosine 661 carries the post-translational modification Phosphotyrosine. Positions 671-684 (KSQEKALLDGESHH) are enriched in basic and acidic residues. Residues 754 to 764 (VVPPRRPPPPK) show a composition bias toward pro residues. Serine 840 carries the phosphoserine modification. Residues 847–908 (PKDSLYVAVA…IPSNYLRKKP (62 aa)) enclose the SH3 4 domain.

Belongs to the SH3PXD2 family. As to quaternary structure, interacts with NOXO1. Interacts (via SH3 domains) with NOXA1; the interaction is direct. Interacts with ADAM15. Interacts with FASLG. Phosphorylated in SRC-transformed cells. Highly expressed in the stromal-vascular fraction of white adipose tissue with moderate expression in heart, skeletal muscle and the mature adipocyte fraction of white adipose tissue. Also expressed in brain, spleen, kidney and liver. Expressed in white and brown adipose tissues, eye, lung, heart, brain, spleen, stomach, liver and skeletal muscle (at protein level). Not expressed in kidney or bone marrow.

It localises to the cytoplasm. The protein localises to the cell projection. It is found in the podosome. Adapter protein involved in invadopodia and podosome formation and extracellular matrix degradation. Binds matrix metalloproteinases (ADAMs), NADPH oxidases (NOXs) and phosphoinositides. Acts as an organizer protein that allows NOX1- or NOX3-dependent reactive oxygen species (ROS) generation and ROS localization. Plays a role in mitotic clonal expansion during the immediate early stage of adipocyte differentiation. The chain is SH3 and PX domain-containing protein 2B (Sh3pxd2b) from Mus musculus (Mouse).